Here is a 372-residue protein sequence, read N- to C-terminus: Pepsin A (372 aa).

A propeptide spans 1–42 (MSVVKIPLVKKKSLRQNLIENGKLKEFMRTHKYNLGSKYIRE) (activation peptide). The region spanning 60-369 (YFGTIGIGTP…DRGNNQIGLA (310 aa)) is the Peptidase A1 domain. Asp-78 is a catalytic residue. Cys-91 and Cys-96 form a disulfide bridge. A Phosphoserine modification is found at Ser-114. Cys-252 and Cys-256 are oxidised to a cystine. Asp-261 is a catalytic residue. Cys-295 and Cys-328 form a disulfide bridge.

Belongs to the peptidase A1 family.

Its subcellular location is the secreted. It catalyses the reaction Preferential cleavage: hydrophobic, preferably aromatic, residues in P1 and P1' positions. Cleaves 1-Phe-|-Val-2, 4-Gln-|-His-5, 13-Glu-|-Ala-14, 14-Ala-|-Leu-15, 15-Leu-|-Tyr-16, 16-Tyr-|-Leu-17, 23-Gly-|-Phe-24, 24-Phe-|-Phe-25 and 25-Phe-|-Tyr-26 bonds in the B chain of insulin.. Functionally, shows particularly broad specificity; although bonds involving phenylalanine and leucine are preferred, many others are also cleaved to some extent. The sequence is that of Pepsin A (PGA) from Bos taurus (Bovine).